Consider the following 309-residue polypeptide: Ecto-ADP-ribosyltransferase 5 (309 aa).

Residues 1 to 23 form the signal peptide; it reads MILEDLLMVLSCLSLHALWKVRA. A disulfide bond links Cys43 and Cys259. Residues 63–253 enclose the TR mART core domain; it reads ALLRESWEAA…IVTLWSYDQT (191 aa). NAD(+) is bound at residue Tyr100. Asn102 is a glycosylation site (N-linked (GlcNAc...) asparagine). The NAD(+) site is built by Arg161 and Gln181. Residue Arg161 is part of the active site. Ser184 is an active-site residue. The N-linked (GlcNAc...) asparagine glycan is linked to Asn197. Residue Ser215 coordinates NAD(+). The active site involves Glu222.

Belongs to the Arg-specific ADP-ribosyltransferase family. As to expression, abundantly expressed in testis. Lower levels in cardiac and skeletal muscle.

It localises to the secreted. The protein resides in the membrane. The catalysed reaction is L-arginyl-[protein] + NAD(+) = N(omega)-(ADP-D-ribosyl)-L-arginyl-[protein] + nicotinamide + H(+). This is Ecto-ADP-ribosyltransferase 5 (Art5) from Mus musculus (Mouse).